Reading from the N-terminus, the 233-residue chain is MREHRPIIALDFPSFEAVKEFLALFPAEESLYLKVGMELYYAAGPEIVSYLKGLGHSVFLDLKLHDIPNTVKSAMKILSQLGVDMTNVHAAGGVEMMKAAREGLGSQAKLIAVTQLTSTSEAQMQEFQNIQTSLQESVIHYAKKTAEAGLDGVVCSAQEVQVIKQATNPDFICLTPGIRPAGVAVGDQKRVMTPADAYQIGSDYIVVGRPITQAEEPVAAYHAIKDEWTQDWN.

Substrate contacts are provided by residues Asp-11, Lys-34, Asp-61–Thr-70, Thr-117, Arg-179, Gln-188, Gly-208, and Arg-209. Lys-63 acts as the Proton donor in catalysis.

This sequence belongs to the OMP decarboxylase family. Type 1 subfamily. As to quaternary structure, homodimer.

The catalysed reaction is orotidine 5'-phosphate + H(+) = UMP + CO2. It functions in the pathway pyrimidine metabolism; UMP biosynthesis via de novo pathway; UMP from orotate: step 2/2. In terms of biological role, catalyzes the decarboxylation of orotidine 5'-monophosphate (OMP) to uridine 5'-monophosphate (UMP). The protein is Orotidine 5'-phosphate decarboxylase of Streptococcus pneumoniae (strain CGSP14).